The following is a 358-amino-acid chain: Uroporphyrinogen decarboxylase (358 aa).

Residues 27 to 31 (RQAGR), aspartate 77, tyrosine 154, serine 209, and histidine 327 each bind substrate.

Belongs to the uroporphyrinogen decarboxylase family. As to quaternary structure, homodimer.

The protein localises to the cytoplasm. It catalyses the reaction uroporphyrinogen III + 4 H(+) = coproporphyrinogen III + 4 CO2. Its pathway is porphyrin-containing compound metabolism; protoporphyrin-IX biosynthesis; coproporphyrinogen-III from 5-aminolevulinate: step 4/4. Catalyzes the decarboxylation of four acetate groups of uroporphyrinogen-III to yield coproporphyrinogen-III. This is Uroporphyrinogen decarboxylase from Azoarcus sp. (strain BH72).